Reading from the N-terminus, the 338-residue chain is MTVKTRASIAKKIEKDGLDSQYLFMDPNEVLQVQEESKKIPYKMEIVWRNVALFAALHVAAAIGLYELVFHAKWQTAVFSFALYVFSGFGITAGAHRLWSHKSYKATTPMRIFLMLLNNIALQNDIIEWARDHRCHHKWTDTDADPHNTTRGFFFTHMGWLLVRKHPQVKEHGGKLDLSDLFSDPVLVFQRKHYFPLVILFCFILPTIIPVYFWKETAFIAFYVAGTFRYCFTLHATWCINSAAHYFGWKPYDTSVSAVENVFTTVVAVGEGGHNFHHTFPQDYRASEYSLIYNWTRVLIDTAAVLGLVYDRKTIADEFISRQVANHGSEESRKKSIM.

Helical transmembrane passes span 51–71, 76–96, 194–214, and 218–238; these read VALF…LVFH, TAVF…AGAH, YFPL…VYFW, and AFIA…HATW.

It belongs to the fatty acid desaturase type 1 family. In terms of tissue distribution, expressed in the intestine in adult worms and in all four larval stages.

The protein localises to the membrane. The catalysed reaction is octadecanoyl-CoA + 2 Fe(II)-[cytochrome b5] + O2 + 2 H(+) = (9Z)-octadecenoyl-CoA + 2 Fe(III)-[cytochrome b5] + 2 H2O. The enzyme catalyses hexadecanoyl-CoA + 2 Fe(II)-[cytochrome b5] + O2 + 2 H(+) = (9Z)-hexadecenoyl-CoA + 2 Fe(III)-[cytochrome b5] + 2 H2O. It catalyses the reaction heptadecanoyl-CoA + 2 Fe(II)-[cytochrome b5] + O2 + 2 H(+) = (9Z)-heptadecenoyl-CoA + 2 Fe(III)-[cytochrome b5] + 2 H2O. It carries out the reaction (11E)-octadecenoyl-CoA + 2 Fe(II)-[cytochrome b5] + O2 + 2 H(+) = (9Z,11E)-octadecadienoyl-CoA + 2 Fe(III)-[cytochrome b5] + 2 H2O. Its pathway is lipid metabolism; monounsaturated fatty acid biosynthesis. The protein operates within lipid metabolism; fatty acid metabolism. In terms of biological role, delta(9)-fatty acid desaturase that acts preferentially on stearoyl-CoA (octadecanoyl-CoA) producing the monounsaturated oleoyl-CoA ((9Z)-octadecenoyl-CoA), one of the most abundant monounsaturated fatty acid in Caenorhabditis elegans phospholipids and triacylglycerols. Also acts on palmitoyl-CoA (hexadecanoyl-CoA), heptadecanoyl-CoA and (11E)-octadecenoyl-CoA (trans-vaccenoyl-CoA), the monounsaturated fatty acids (MUFAs) produced are further used by several other desaturases and elongases as substrates to synthesize polyunsaturated fatty acids (PUFAs) endogenously (PUFAs are essential for membrane structure and many cellular and physiological processes). Unlike plants, Caenorhabditis elegans desaturases seem to use fatty acyl-CoAs as substrates. Partially inhibits expression of genes involved in beta-oxidation, such as ech-1 and acs-2, perhaps signaling via the actions of one of its fatty acid products. May form part of a negative feedback loop with the transcription factor nhr-49 to limit beta-oxidation, in which nhr-49 stimulates expression of fat-7 and acs-2, and in turn fat-7 indirectly inhibits acs-2 and other genes also involved in beta-oxidation. The sequence is that of Delta(9)-fatty-acid desaturase fat-7 (fat-7) from Caenorhabditis elegans.